The chain runs to 517 residues: FAD-dependent monooxygenase dmxR9 (517 aa).

Positions 96 and 162 each coordinate FAD. Catalysis depends on residues Arg243 and Tyr270. FAD contacts are provided by Asp365 and Ala378.

It belongs to the paxM FAD-dependent monooxygenase family. FAD serves as cofactor.

The protein operates within secondary metabolite biosynthesis. Functionally, FAD-dependent monooxygenase; part of the gene cluster that mediates the biosynthesis of the dimeric xanthones cryptosporioptides. The pathway begins with the synthesis of atrochrysone thioester by the polyketide synthase dmx-nrPKS. The atrochrysone carboxyl ACP thioesterase dmxR1 then breaks the thioester bond and releases the atrochrysone carboxylic acid from dmx-nrPKS. Atrochrysone carboxylic acid is decarboxylated by the decarboxylase dmxR15, and oxidized by the anthrone oxygenase dmxR16 to yield emodin. Emodin is then reduced to emodin hydroquinone by the oxidoreductase dmxR7. A-ring reduction by the short chain dehydrogenase dmxR18, dehydration by the scytalone dehydratase-like protein dmxR17 and probable spontaneous re-oxidation, results in overall deoxygenation to chrysophanol. Baeyer-Villiger oxidation by the Baeyer-Villiger monooxygenase (BVMO) dmxR6 then yields monodictylactone in equilibrium with monodictyphenone. In the case of the cryptosporioptides biosynthesis, monodictylactone is reduced at C-12 to an alcohol (by the short chain dehydrogenases dmxR12 or dmxR8) and hydroxylated at C-5 by dmxR9, yielding the electron-rich aromatic which could eliminate H(2)O to form the ortho-quinonemethide, followed by tautomerisation to paraquinone and complete the formal reduction to produce the 10-methylgroup. Conjugate addition of C-4a-OH to the resulting paraquinone by the monooxygenase dmxR10 then gives cyclohexadienone, which is then reduced at C-5 by the short chain dehydrogenase dmxR3 to give the dihydroxanthone. The 6,7-epoxide in the cryptosporioptides could be introduced by the cytochrome P450 monooxygenase dmxL3. The highly reducing PKS dmxL2 manufactures butyrate, which is further carboxylated by dmxL1 to form ethylmalonate. It is not yet clear whether the carboxylation occurs while the butyrate is attached to the ACP of dmxL2, but this unusual fungal metabolite could then be esterified to O-5 by the O-acetyltransferase dmxR13. Finally, dimerization performed by dmxR5 gives the observed dimers cryptosporioptides A, B and C as the final products of the pathway. The protein is FAD-dependent monooxygenase dmxR9 of Cryptosporiopsis sp. (strain 8999).